The chain runs to 679 residues: Stress-70 protein, mitochondrial (679 aa).

Residues M1 to Y46 constitute a mitochondrion transit peptide. The interaction with NFS1 stretch occupies residues M1–V432. ADP is bound by residues T63 and N64. Residues T63–D431 are nucleotide-binding domain (NBD). K76 carries the post-translational modification N6-acetyllysine. T87 is modified (phosphothreonine). K135 and K138 each carry N6-acetyllysine; alternate. 2 positions are modified to N6-succinyllysine; alternate: K135 and K138. An N6-acetyllysine modification is found at K143. K206 carries the post-translational modification N6-acetyllysine; alternate. K206 carries the N6-succinyllysine; alternate modification. Position 206 is an N6-malonyllysine; alternate (K206). Residues K234 and K288 each carry the N6-acetyllysine modification. Position 300 is an N6-acetyllysine; alternate (K300). K300 carries the post-translational modification N6-succinyllysine; alternate. Residues E313, K316, and S320 each coordinate ADP. N6-acetyllysine; alternate is present on K360. Position 360 is an N6-succinyllysine; alternate (K360). K368 is modified (N6-succinyllysine). Positions 388 and 391 each coordinate ADP. At K394 the chain carries N6-succinyllysine. S408 is subject to Phosphoserine. The tract at residues V432–T441 is interdomain linker. The tract at residues V432–Q679 is interaction with FXN and ISCU. Positions P442–Q679 are substrate-binding domain (SBD). R513 carries the post-translational modification Omega-N-methylarginine. Residues K567 and K600 each carry the N6-acetyllysine; alternate modification. N6-succinyllysine; alternate is present on residues K567 and K600. Residue K610 is modified to N6-succinyllysine. The residue at position 612 (K612) is an N6-acetyllysine. K646 is subject to N6-acetyllysine; alternate. K646 bears the N6-succinyllysine; alternate mark. Positions M655–Q679 are disordered. The segment covering E669–Q679 has biased composition (basic and acidic residues).

It belongs to the heat shock protein 70 family. In terms of assembly, interacts strongly with the intermediate form of FXN and weakly with its mature form. Interacts with HSCB. Associates with the mitochondrial contact site and cristae organizing system (MICOS) complex, composed of at least MICOS10/MIC10, CHCHD3/MIC19, CHCHD6/MIC25, APOOL/MIC27, IMMT/MIC60, APOO/MIC23/MIC26 and QIL1/MIC13. This complex was also known under the names MINOS or MitOS complex. The MICOS complex associates with mitochondrial outer membrane proteins SAMM50, MTX1, MTX2 and DNAJC11, mitochondrial inner membrane protein TMEM11 and with HSPA9. Interacts with DNLZ, the interaction is required to prevent self-aggregation. Interacts with TESPA1. Interacts with PDPN. Interacts with NFU1, NFS1 and ISCU. Interacts with TP53; the interaction promotes TP53 degradation. Interacts (via SBD domain) with UBXN2A; the interaction with UBXN2A inhibits HSPA9 interaction with and degradation of TP53, thereby promotes TP53 translocation to the nucleus. Interacts with ITPR1 AND VDAC1; this interaction couples ITPR1 to VDAC1. Component of the TIM23 mitochondrial inner membrane pre-sequence translocase complex.

It localises to the mitochondrion. The protein localises to the nucleus. The protein resides in the nucleolus. It is found in the cytoplasm. Its subcellular location is the mitochondrion matrix. The enzyme catalyses ATP + H2O = ADP + phosphate + H(+). With respect to regulation, the chaperone activity is regulated by ATP-induced allosteric coupling of the nucleotide-binding (NBD) and substrate-binding (SBD) domains. ATP binding in the nucleotide-binding pocket (NBP) leads to a conformational change in the NBD, which is transferred through the interdomain linker (IDL) to the substrate-binding domain (SBD). This elicits a reduced substrate affinity and a faster substrate exchange rate. Upon hydrolysis of ATP to ADP, the protein undergoes a conformational change that increases its affinity for substrate proteins. It cycles through repeated phases of ATP hydrolysis and nucleotide exchange, facilitating repeated cycles of substrate binding and release. Functions in collaboration with co-chaperones. Functions with the co-chaperone, DNLZ, to maintain solubility and regulate ATP hydrolysis. Nucleotide exchange factors, GRPEL1 and GRPEL2, accelerate nucleotide exchange. Its function is as follows. Mitochondrial chaperone that plays a key role in mitochondrial protein import, folding, and assembly. Plays an essential role in the protein quality control system, the correct folding of proteins, the re-folding of misfolded proteins, and the targeting of proteins for subsequent degradation. These processes are achieved through cycles of ATP binding, ATP hydrolysis, and ADP release, mediated by co-chaperones. In mitochondria, it associates with the TIM (translocase of the inner membrane) protein complex to assist in the import and folding of mitochondrial proteins. Plays an important role in mitochondrial iron-sulfur cluster (ISC) biogenesis, interacts with and stabilizes ISC cluster assembly proteins FXN, NFU1, NFS1 and ISCU. Regulates erythropoiesis via stabilization of ISC assembly. Regulates mitochondrial calcium-dependent apoptosis by coupling two calcium channels, ITPR1 and VDAC1, at the mitochondria-associated endoplasmic reticulum (ER) membrane to facilitate calcium transport from the ER lumen to the mitochondria intermembrane space, providing calcium for the downstream calcium channel MCU, which releases it into the mitochondrial matrix. Although primarily located in the mitochondria, it is also found in other cellular compartments. In the cytosol, it associates with proteins involved in signaling, apoptosis, or senescence. It may play a role in cell cycle regulation via its interaction with and promotion of degradation of TP53. May play a role in the control of cell proliferation and cellular aging. Protects against reactive oxygen species (ROS). Extracellular HSPA9 plays a cytoprotective role by preventing cell lysis following immune attack by the membrane attack complex by disrupting formation of the complex. In Rattus norvegicus (Rat), this protein is Stress-70 protein, mitochondrial.